The following is a 530-amino-acid chain: Berberine bridge enzyme-like 22 (530 aa).

The signal sequence occupies residues methionine 1–serine 22. Cysteine 32 and cysteine 99 are joined by a disulfide. Residues asparagine 39, asparagine 47, asparagine 68, asparagine 75, asparagine 141, and asparagine 486 are each glycosylated (N-linked (GlcNAc...) asparagine). The FAD-binding PCMH-type domain occupies threonine 77–valine 251. A cross-link (6-(S-cysteinyl)-8alpha-(pros-histidyl)-FAD (His-Cys)) is located at residues histidine 114–cysteine 176.

The protein belongs to the oxygen-dependent FAD-linked oxidoreductase family. FAD serves as cofactor. Post-translationally, the FAD cofactor is bound via a bicovalent 6-S-cysteinyl, 8alpha-N1-histidyl FAD linkage. In terms of tissue distribution, accumulates in cell walls of etiolated hypocotyls.

It localises to the secreted. Its subcellular location is the cell wall. This chain is Berberine bridge enzyme-like 22, found in Arabidopsis thaliana (Mouse-ear cress).